The following is a 371-amino-acid chain: Glycosyltransferase 8 domain-containing protein 1 (371 aa).

Residues 1–7 (MSFRKVH) lie on the Cytoplasmic side of the membrane. The chain crosses the membrane as a helical; Signal-anchor for type II membrane protein span at residues 8–28 (IAIILLAAVVFLLILHHNILG). Over 29 to 371 (LTDILTRQSS…RRHGEADGTK (343 aa)) the chain is Lumenal. N-linked (GlcNAc...) asparagine glycosylation is found at N104, N249, and N257.

This sequence belongs to the glycosyltransferase 8 family.

Its subcellular location is the membrane. The sequence is that of Glycosyltransferase 8 domain-containing protein 1 (glt8d1) from Xenopus tropicalis (Western clawed frog).